A 128-amino-acid polypeptide reads, in one-letter code: Probable soluble cytochrome b562 2 (128 aa).

An N-terminal signal peptide occupies residues 1–22 (MGKTLMALITAALLSTSSLVMA). Residues methionine 29 and histidine 124 each contribute to the heme b site.

This sequence belongs to the cytochrome b562 family. Requires heme b as cofactor.

Its subcellular location is the periplasm. In terms of biological role, electron-transport protein of unknown function. This is Probable soluble cytochrome b562 2 (cybC2) from Yersinia pestis.